The sequence spans 1146 residues: Elicitor of plant defense protein 1 (1146 aa).

Disordered regions lie at residues 25–75 and 156–226; these read DPLP…RLSN and ARPP…PRQG. Residues 164 to 177 show a composition bias toward basic and acidic residues; the sequence is RAERIKAEDSDQSG. The region spanning 246 to 500 is the uDENN domain; the sequence is PLNTDPNMHP…NLCTEAFSPL (255 aa). The cDENN domain maps to 522–656; sequence VNEIPGSRTI…HRRKLHALLQ (135 aa). Residues 658–1016 enclose the dDENN domain; that stretch reads AAPAKLRYGV…ERETKPGTTA (359 aa). Positions 730–806 are disordered; sequence LHSKVDPNKP…RRSSSFGVDK (77 aa). A compositionally biased stretch (basic and acidic residues) spans 732-743; the sequence is SKVDPNKPDRPG. Low complexity predominate over residues 744-760; the sequence is TSKSTRTSPPSSVSPVS. Residues 769 to 783 are compositionally biased toward polar residues; the sequence is TPVSRSDSGFALTST. Basic and acidic residues predominate over residues 784–797; sequence LREKRSRNFDEKTR. The Phorbol-ester/DAG-type zinc-finger motif lies at 883-931; the sequence is GHCFNWEEGALSSSCSVCDDRAEGDGIYKCSGCSAFAHGRCLGCVSLAC. A disordered region spans residues 1121–1146; sequence PRPEQRGTRGLVRKQVPSMLGTSPTN.

The protein belongs to the EPD1 elicitor family. Interacts with host cotton EIR5A (AC A0A5J5T2N2) and EIR5D (AC A0A5J5NT52) and host N.benthamiana EIR (AC P0DXJ0).

It is found in the secreted. It localises to the host cell. Its function is as follows. Acts as an elicitor that triggers defense responses in both Nicotiana benthamiana and cotton plants. Triggers the accumulation of reactive oxygen species (ROS) and the activation of cell death in cotton plants. Induces significantly enhanced resistance of Nicotiana benthamiana to both the broad-host-range filamentous pathogen Botrytis cinerea and the semibiotrophic pathogen Phytophthora capsici. Stimulates the expression of EIR5A (AC A0A5J5T2N2) and EIR5D (AC A0A5J5NT52) in cotton plants and recognition of EPD1 potentiates EIRs to enhance cotton PAMP-triggered immunity (PTI). This chain is Elicitor of plant defense protein 1, found in Verticillium dahliae (strain VdLs.17 / ATCC MYA-4575 / FGSC 10137) (Verticillium wilt).